Here is a 407-residue protein sequence, read N- to C-terminus: 3-oxoacyl-[acyl-carrier-protein] synthase 1 (407 aa).

The 406-residue stretch at 1 to 406 (MKRVVITGFG…GTNVSLILKK (406 aa)) folds into the Ketosynthase family 3 (KS3) domain. Residues C164, H300, and H336 each act as for beta-ketoacyl synthase activity in the active site.

The protein belongs to the thiolase-like superfamily. Beta-ketoacyl-ACP synthases family. In terms of assembly, homodimer.

It is found in the cytoplasm. The catalysed reaction is a fatty acyl-[ACP] + malonyl-[ACP] + H(+) = a 3-oxoacyl-[ACP] + holo-[ACP] + CO2. It catalyses the reaction (3Z)-decenoyl-[ACP] + malonyl-[ACP] + H(+) = 3-oxo-(5Z)-dodecenoyl-[ACP] + holo-[ACP] + CO2. Its pathway is lipid metabolism; fatty acid biosynthesis. Functionally, involved in the type II fatty acid elongation cycle. Catalyzes the elongation of a wide range of acyl-ACP by the addition of two carbons from malonyl-ACP to an acyl acceptor. Can also use unsaturated fatty acids. Catalyzes a key reaction in unsaturated fatty acid (UFA) synthesis, the elongation of the cis-3-decenoyl-ACP produced by FabA. This is 3-oxoacyl-[acyl-carrier-protein] synthase 1 (fabB) from Buchnera aphidicola subsp. Schizaphis graminum (strain Sg).